A 407-amino-acid chain; its full sequence is Lysosome-associated membrane glycoprotein 1 (407 aa).

A signal peptide spans 1-21 (MAAPGAPRSLLLLLLAGLAHG). The tract at residues 22 to 189 (ASALFVVKDS…SKEETRCTQD (168 aa)) is first lumenal domain. Residues 22 to 371 (ASALFVVKDS…VEECMQDGNN (350 aa)) lie on the Lumenal side of the membrane. Asparagine 32, asparagine 40, asparagine 57, asparagine 72, asparagine 79, asparagine 98, asparagine 102, asparagine 116, asparagine 125, asparagine 145, asparagine 160, and asparagine 178 each carry an N-linked (GlcNAc...) asparagine glycan. A disulfide bridge links cysteine 36 with cysteine 75. Cysteine 150 and cysteine 186 are disulfide-bonded. The interval 183-206 (ETRCTQDGPSPTTVPPSPSPPLVP) is disordered. The segment at 190–219 (GPSPTTVPPSPSPPLVPTNPTVIKYNVTGE) is hinge. A compositionally biased stretch (pro residues) spans 194-206 (TTVPPSPSPPLVP). N-linked (GlcNAc...) asparagine glycans are attached at residues asparagine 215, asparagine 220, asparagine 233, asparagine 241, asparagine 253, asparagine 283, asparagine 297, asparagine 304, and asparagine 312. A second lumenal domain region spans residues 220–371 (NGTCLLASMA…VEECMQDGNN (152 aa)). Cysteine 223 and cysteine 260 are joined by a disulfide. Cysteine 328 and cysteine 365 are oxidised to a cystine. A helical transmembrane segment spans residues 372–395 (MLIPIAVGGALAGLVLIVLIAYLI). The Cytoplasmic portion of the chain corresponds to 396–407 (GRKRSHAGYQTI).

The protein belongs to the LAMP family. In terms of assembly, interacts with ABCB9; this interaction strongly stabilizes ABCB9 and protects ABCB9 against lysosomal degradation. Interacts with FURIN. Interacts with TMEM175; inhibiting the proton channel activity of TMEM175. Post-translationally, O- and N-glycosylated; some of the N-glycans attached to LAMP-1 are polylactosaminoglycans.

Its subcellular location is the lysosome membrane. It is found in the endosome membrane. It localises to the late endosome membrane. The protein localises to the cell membrane. The protein resides in the cytolytic granule membrane. In terms of biological role, lysosomal membrane glycoprotein which plays an important role in lysosome biogenesis, lysosomal pH regulation, autophagy and cholesterol homeostasis. Acts as an important regulator of lysosomal lumen pH regulation by acting as a direct inhibitor of the proton channel TMEM175, facilitating lysosomal acidification for optimal hydrolase activity. Also plays an important role in NK-cells cytotoxicity. Mechanistically, participates in cytotoxic granule movement to the cell surface and perforin trafficking to the lytic granule. In addition, protects NK-cells from degranulation-associated damage induced by their own cytotoxic granule content. Presents carbohydrate ligands to selectins. The protein is Lysosome-associated membrane glycoprotein 1 (LAMP1) of Cricetulus griseus (Chinese hamster).